Here is a 164-residue protein sequence, read N- to C-terminus: Phosphopantetheine adenylyltransferase (164 aa).

Residue threonine 14 participates in substrate binding. Residues 14–15 (TF) and histidine 22 contribute to the ATP site. Residues lysine 46, methionine 78, and arginine 92 each contribute to the substrate site. Residues 93 to 95 (GLR), glutamate 103, and 128 to 134 (HAFISST) contribute to the ATP site.

It belongs to the bacterial CoaD family. In terms of assembly, homohexamer. It depends on Mg(2+) as a cofactor.

The protein localises to the cytoplasm. It catalyses the reaction (R)-4'-phosphopantetheine + ATP + H(+) = 3'-dephospho-CoA + diphosphate. The protein operates within cofactor biosynthesis; coenzyme A biosynthesis; CoA from (R)-pantothenate: step 4/5. Its function is as follows. Reversibly transfers an adenylyl group from ATP to 4'-phosphopantetheine, yielding dephospho-CoA (dPCoA) and pyrophosphate. The sequence is that of Phosphopantetheine adenylyltransferase from Vibrio vulnificus (strain CMCP6).